A 303-amino-acid chain; its full sequence is tRNA pseudouridine synthase B (303 aa).

The Nucleophile role is filled by aspartate 38.

It belongs to the pseudouridine synthase TruB family. Type 1 subfamily.

The catalysed reaction is uridine(55) in tRNA = pseudouridine(55) in tRNA. Its function is as follows. Responsible for synthesis of pseudouridine from uracil-55 in the psi GC loop of transfer RNAs. In Oceanobacillus iheyensis (strain DSM 14371 / CIP 107618 / JCM 11309 / KCTC 3954 / HTE831), this protein is tRNA pseudouridine synthase B.